The sequence spans 349 residues: MMNLQGKKITVHDMTLRDGMHPKRHLMTLDQMKSIASGLDAAGVPLIEVTHGDGLGGSSVNYGFPAHSDEEYLGAVIPLMKQAKVSALLLPGIGTVDHLLMAKDLGVHTVRVATHCTEADVSEQHISKARSLEMDTVGFLMMAHMASPEKLVSQALLMEGYGANCIYVTDSAGYMLPDDVTVRLRAVRGALKPETELGFHGHHNLAMGVANSIAAVDAGANRIDAAAAGLGAGAGNTPMEVFIAVCDRMGIATGVDVFRIQDVAEDLVVPIMDHIIRVDRDSLTLGYAGVYSSFLLFAKRAEKKYGVPAREILVELGRRGMVGGQEDMIEDTAMTLARERAAAAHKAAA.

A Pyruvate carboxyltransferase domain is found at 9 to 261 (ITVHDMTLRD…ATGVDVFRIQ (253 aa)). 17–18 (RD) provides a ligand contact to substrate. Position 18 (aspartate 18) interacts with Mn(2+). Histidine 21 (proton acceptor) is an active-site residue. 2 residues coordinate substrate: serine 171 and histidine 200. Positions 200 and 202 each coordinate Mn(2+). Residue tyrosine 291 coordinates substrate.

Belongs to the 4-hydroxy-2-oxovalerate aldolase family.

The catalysed reaction is (S)-4-hydroxy-2-oxopentanoate = acetaldehyde + pyruvate. The sequence is that of 4-hydroxy-2-oxovalerate aldolase 1 from Methylibium petroleiphilum (strain ATCC BAA-1232 / LMG 22953 / PM1).